A 180-amino-acid chain; its full sequence is Large ribosomal subunit protein eL18 (180 aa).

The interval 152–180 (FGPAPGVPGSHTKPYVISKSRERTNAHRA) is disordered. The segment covering 170-180 (KSRERTNAHRA) has biased composition (basic and acidic residues).

The protein belongs to the eukaryotic ribosomal protein eL18 family.

The protein resides in the cytoplasm. The polypeptide is Large ribosomal subunit protein eL18 (RPL18) (Taenia asiatica (Asian tapeworm)).